Reading from the N-terminus, the 201-residue chain is Ras-related protein Rab-1B (201 aa).

Residue Met-1 is modified to N-acetylmethionine. GTP contacts are provided by Ser-17, Gly-18, Val-19, Gly-20, Lys-21, Ser-22, Cys-23, Tyr-33, Thr-34, Glu-35, Ser-36, Ser-39, and Thr-40. Ser-22 contacts Mg(2+). The Switch 1 motif lies at 30 to 45; the sequence is DDTYTESYISTIGVDF. Residues Thr-40 and Asp-63 each coordinate Mg(2+). The interval 64–83 is switch 2 region; required for interaction with REP1/CHM; it reads TAGQERFRTITSSYYRGAHG. The Switch 2 motif lies at 65-80; that stretch reads AGQERFRTITSSYYRG. Positions 66, 121, 122, 124, 151, 152, and 153 each coordinate GTP. The disordered stretch occupies residues 174 to 201; it reads GPGAASGGERPNLKIDSTPVKPAGGGCC. S-geranylgeranyl cysteine attachment occurs at residues Cys-200 and Cys-201. Cys-201 is subject to Cysteine methyl ester.

Belongs to the small GTPase superfamily. Rab family. As to quaternary structure, interacts with MICAL1 and MICAL2. Interacts (in GTP-bound form) with MICALCL, MICAL1 and MILCAL3. Interacts with GDI1; the interaction requires the GDP-bound state. Interacts with CHM/REP1; the interaction requires the GDP-bound form and is necessary for prenylation by GGTase II. Interacts with RabGAP TBC1D20. Interacts (in GDP-bound form) with lipid phosphatase MTMR6 (via GRAM domain); the interaction regulates MTMR6 recruitment to the endoplasmic reticulum-Golgi intermediate compartment. Interacts (in GDP-bound form) with lipid phosphatase MTMR7. Mg(2+) serves as cofactor. Post-translationally, prenylated; by GGTase II, only after interaction of the substrate with Rab escort protein 1 (REP1).

The protein localises to the cytoplasm. It localises to the membrane. It is found in the preautophagosomal structure membrane. Its subcellular location is the perinuclear region. The catalysed reaction is GTP + H2O = GDP + phosphate + H(+). With respect to regulation, regulated by guanine nucleotide exchange factors (GEFs) which promote the exchange of bound GDP for free GTP. Regulated by GTPase activating proteins (GAPs) including TBC1D20 which increases the GTP hydrolysis activity. Inhibited by GDP dissociation inhibitors (GDIs). In terms of biological role, the small GTPases Rab are key regulators of intracellular membrane trafficking, from the formation of transport vesicles to their fusion with membranes. Rabs cycle between an inactive GDP-bound form and an active GTP-bound form that is able to recruit to membranes different set of downstream effectors directly responsible for vesicle formation, movement, tethering and fusion. Plays a role in the initial events of the autophagic vacuole development which take place at specialized regions of the endoplasmic reticulum. Regulates vesicular transport between the endoplasmic reticulum and successive Golgi compartments. Required to modulate the compacted morphology of the Golgi. Promotes the recruitment of lipid phosphatase MTMR6 to the endoplasmic reticulum-Golgi intermediate compartment. The protein is Ras-related protein Rab-1B (RAB1B) of Macaca fascicularis (Crab-eating macaque).